The sequence spans 1171 residues: Phytochrome B (1171 aa).

Residues 1–19 (MASGSRATPTRSPSSARPA) show a composition bias toward low complexity. The interval 1-53 (MASGSRATPTRSPSSARPAAPRHQHHHSQSSGGSTSRAGGGGGGGGGGGGGAA) is disordered. The segment covering 38–52 (AGGGGGGGGGGGGGA) has biased composition (gly residues). A GAF domain is found at 259-442 (DVKLLCDTVV…AFGLQLNMEL (184 aa)). Position 364 (Cys-364) interacts with phytochromobilin. PAS domains are found at residues 661–732 (VARE…LRGD) and 795–866 (DYKA…MIVL). Positions 943–1161 (YIYQEIKNPL…FFHIVLELPQ (219 aa)) constitute a Histidine kinase domain.

Belongs to the phytochrome family. Homodimer. In terms of processing, contains one covalently linked phytochromobilin chromophore.

Functionally, regulatory photoreceptor which exists in two forms that are reversibly interconvertible by light: the Pr form that absorbs maximally in the red region of the spectrum and the Pfr form that absorbs maximally in the far-red region. Photoconversion of Pr to Pfr induces an array of morphogenic responses, whereas reconversion of Pfr to Pr cancels the induction of those responses. Pfr controls the expression of a number of nuclear genes including those encoding the small subunit of ribulose-bisphosphate carboxylase, chlorophyll A/B binding protein, protochlorophyllide reductase, rRNA, etc. It also controls the expression of its own gene(s) in a negative feedback fashion. In Oryza sativa subsp. japonica (Rice), this protein is Phytochrome B (PHYB).